Reading from the N-terminus, the 129-residue chain is MSMERQLKEQFAENREIVEALLGDGSDADSEYVIEHHFSSTNFDKLEKAAVDAFKLGFEVNDAEEMELEDGSEIFCFDAIANHKLDVALLDKACEQLMQVAHKQKVDYDGWGTYFIGDEIEEDDEEEQA.

It belongs to the RraB family. In terms of assembly, interacts with the C-terminal region of Rne.

The protein resides in the cytoplasm. Its function is as follows. Globally modulates RNA abundance by binding to RNase E (Rne) and regulating its endonucleolytic activity. Can modulate Rne action in a substrate-dependent manner by altering the composition of the degradosome. The protein is Regulator of ribonuclease activity B of Shewanella denitrificans (strain OS217 / ATCC BAA-1090 / DSM 15013).